A 378-amino-acid polypeptide reads, in one-letter code: Chorismate synthase (378 aa).

Residue Arg-49 participates in NADP(+) binding. FMN-binding positions include 126-128 (RAS), Gly-287, 302-306 (KPTAT), and Arg-328.

The protein belongs to the chorismate synthase family. Homotetramer. It depends on FMNH2 as a cofactor.

It carries out the reaction 5-O-(1-carboxyvinyl)-3-phosphoshikimate = chorismate + phosphate. Its pathway is metabolic intermediate biosynthesis; chorismate biosynthesis; chorismate from D-erythrose 4-phosphate and phosphoenolpyruvate: step 7/7. Catalyzes the anti-1,4-elimination of the C-3 phosphate and the C-6 proR hydrogen from 5-enolpyruvylshikimate-3-phosphate (EPSP) to yield chorismate, which is the branch point compound that serves as the starting substrate for the three terminal pathways of aromatic amino acid biosynthesis. This reaction introduces a second double bond into the aromatic ring system. The sequence is that of Chorismate synthase from Synechococcus sp. (strain JA-3-3Ab) (Cyanobacteria bacterium Yellowstone A-Prime).